The primary structure comprises 140 residues: MAKKVTAVIKLALPAGKATPAPPVGPALGAHGVNIMAFCKEYNERTKDQVGLVIPVEITVYEDRSFTFILKTPPTAVLIKKALGIETASGVPNKQKVGKLTDAQVEEIAKIKMPDLNANDLEAAKRMVRGTARSMGVDVE.

Belongs to the universal ribosomal protein uL11 family. Part of the ribosomal stalk of the 50S ribosomal subunit. Interacts with L10 and the large rRNA to form the base of the stalk. L10 forms an elongated spine to which L12 dimers bind in a sequential fashion forming a multimeric L10(L12)X complex. In terms of processing, one or more lysine residues are methylated.

Its function is as follows. Forms part of the ribosomal stalk which helps the ribosome interact with GTP-bound translation factors. The chain is Large ribosomal subunit protein uL11 from Symbiobacterium thermophilum (strain DSM 24528 / JCM 14929 / IAM 14863 / T).